The chain runs to 330 residues: GDP-mannose transporter (330 aa).

At 1–13 (MSQLKVDNGPLSH) the chain is on the cytoplasmic side. Residues 14–34 (VANSGPISIGAYCFSSIMMTV) traverse the membrane as a helical segment. The Lumenal segment spans residues 35-48 (TNKFVVNLKGFNMN). Residues 49–69 (FVMLFVQAAVCVNLLFFLRLL) traverse the membrane as a helical segment. The Cytoplasmic portion of the chain corresponds to 70–81 (GYAKFRPLNRTD). The helical transmembrane segment at 82-98 (AKNWFPITIFLVLMIYT) threads the bilayer. At 99 to 104 (SSKSLQ) the chain is on the lumenal side. The chain crosses the membrane as a helical span at residues 105–124 (YLAVPIYTIFKNLTIILIAY). The Cytoplasmic segment spans residues 125–138 (GEVLFFGGSVTAME). The helical transmembrane segment at 139–155 (LSSFLLMVLSSVVATLG) threads the bilayer. At 156–170 (DQQALKKTADAGASL) the chain is on the lumenal side. The chain crosses the membrane as a helical span at residues 171–191 (FNIGYMWMFINCLSSAAFVLV). Topologically, residues 192–203 (MRKRIKLTNFKD) are cytoplasmic. Residues 204 to 224 (FDTMFYNNILSMPVLLALSFL) form a helical membrane-spanning segment. Topologically, residues 225–241 (MEDWSTENLTKNLSRDS) are lumenal. A helical transmembrane segment spans residues 242 to 262 (VTAMIISGMTAVCISYCSGWC). The Cytoplasmic segment spans residues 263-269 (VRVTSST). A helical membrane pass occupies residues 270-290 (TYSMVGALNKLPIALSGLIFF). Topologically, residues 291–294 (DAPK) are lumenal. The chain crosses the membrane as a helical span at residues 295–315 (NFLSIFSIFLGFLSGIVYAVA). Residues 316 to 330 (KQKKQQNPQPSAPIK) lie on the Cytoplasmic side of the membrane.

It belongs to the TPT transporter family. SLC35D subfamily. As to quaternary structure, homooligomer.

The protein localises to the golgi apparatus membrane. It localises to the cytoplasmic vesicle membrane. It is found in the endoplasmic reticulum membrane. Functionally, involved in the import of GDP-mannose from the cytoplasm into the Golgi lumen. This Kluyveromyces lactis (strain ATCC 8585 / CBS 2359 / DSM 70799 / NBRC 1267 / NRRL Y-1140 / WM37) (Yeast) protein is GDP-mannose transporter (VRG4).